A 232-amino-acid polypeptide reads, in one-letter code: Uracil-DNA glycosylase (232 aa).

The Proton acceptor role is filled by Asp-70.

Belongs to the uracil-DNA glycosylase (UDG) superfamily. UNG family.

It is found in the cytoplasm. The enzyme catalyses Hydrolyzes single-stranded DNA or mismatched double-stranded DNA and polynucleotides, releasing free uracil.. Its function is as follows. Excises uracil residues from the DNA which can arise as a result of misincorporation of dUMP residues by DNA polymerase or due to deamination of cytosine. This chain is Uracil-DNA glycosylase, found in Campylobacter fetus subsp. fetus (strain 82-40).